We begin with the raw amino-acid sequence, 281 residues long: Nucleotide-binding protein Patl_0571 (281 aa).

8–15 (GRSGSGKS) contributes to the ATP binding site. 56–59 (DVRN) is a binding site for GTP.

Belongs to the RapZ-like family.

Displays ATPase and GTPase activities. The polypeptide is Nucleotide-binding protein Patl_0571 (Pseudoalteromonas atlantica (strain T6c / ATCC BAA-1087)).